Consider the following 121-residue polypeptide: Ribonuclease P protein component (121 aa).

It belongs to the RnpA family. As to quaternary structure, consists of a catalytic RNA component (M1 or rnpB) and a protein subunit.

It carries out the reaction Endonucleolytic cleavage of RNA, removing 5'-extranucleotides from tRNA precursor.. RNaseP catalyzes the removal of the 5'-leader sequence from pre-tRNA to produce the mature 5'-terminus. It can also cleave other RNA substrates such as 4.5S RNA. The protein component plays an auxiliary but essential role in vivo by binding to the 5'-leader sequence and broadening the substrate specificity of the ribozyme. The chain is Ribonuclease P protein component from Neisseria meningitidis serogroup B (strain ATCC BAA-335 / MC58).